A 528-amino-acid chain; its full sequence is GTPase Der (528 aa).

Acidic residues-rich tracts occupy residues Met1–Glu12 and Gly30–Gly62. Positions Met1–Gly62 are disordered. 2 EngA-type G domains span residues Cys90 to Pro253 and Arg263 to Asp436. GTP contacts are provided by residues Gly96–Ser103, Asp143–Trp147, Asn205–Asp208, Gly269–Ser276, Asp316–Leu320, and Asn381–Asp384. In terms of domain architecture, KH-like spans Arg437 to Glu519.

It belongs to the TRAFAC class TrmE-Era-EngA-EngB-Septin-like GTPase superfamily. EngA (Der) GTPase family. Associates with the 50S ribosomal subunit.

Functionally, GTPase that plays an essential role in the late steps of ribosome biogenesis. The polypeptide is GTPase Der (Corynebacterium efficiens (strain DSM 44549 / YS-314 / AJ 12310 / JCM 11189 / NBRC 100395)).